Consider the following 386-residue polypeptide: Succinate--CoA ligase [ADP-forming] subunit beta (386 aa).

An ATP-grasp domain is found at 9–244 (KDLLTSYQLP…PSQENIRDVL (236 aa)). ATP is bound by residues Lys-46, 53-55 (GRG), Val-102, and Glu-107. Positions 199 and 213 each coordinate Mg(2+). Substrate is bound by residues Asn-264 and 321–323 (GIM).

The protein belongs to the succinate/malate CoA ligase beta subunit family. As to quaternary structure, heterotetramer of two alpha and two beta subunits. The cofactor is Mg(2+).

The enzyme catalyses succinate + ATP + CoA = succinyl-CoA + ADP + phosphate. It catalyses the reaction GTP + succinate + CoA = succinyl-CoA + GDP + phosphate. It participates in carbohydrate metabolism; tricarboxylic acid cycle; succinate from succinyl-CoA (ligase route): step 1/1. Functionally, succinyl-CoA synthetase functions in the citric acid cycle (TCA), coupling the hydrolysis of succinyl-CoA to the synthesis of either ATP or GTP and thus represents the only step of substrate-level phosphorylation in the TCA. The beta subunit provides nucleotide specificity of the enzyme and binds the substrate succinate, while the binding sites for coenzyme A and phosphate are found in the alpha subunit. The protein is Succinate--CoA ligase [ADP-forming] subunit beta of Chlamydia muridarum (strain MoPn / Nigg).